The following is a 962-amino-acid chain: Voltage-gated delayed rectifier potassium channel KCNH1 (962 aa).

The Cytoplasmic portion of the chain corresponds to 1 to 220 (MTMAGGRRGL…LHYCVFKTTW (220 aa)). Residues 14 to 94 (QNTFLENIVR…QTFENYEMNS (81 aa)) enclose the PAS domain. The PAC domain occupies 93–145 (NSFEILMYKKNRTPVWFFVKIAPIRNEQDKVVLFLCTFSDITAFKQPIEDDSC). The interval 151-162 (FARLTRALTSSR) is required for phosphatidylinositol bisphosphate binding. Residues 221-241 (DWIILILTFYTAILVPYNVSF) traverse the membrane as a helical segment. Residues 242–248 (KTRQNNV) lie on the Extracellular side of the membrane. Residues 249-269 (AWLVVDSIVDVIFLVDIVLNF) traverse the membrane as a helical segment. At 270 to 290 (HTTFVGPAGEVISDPKLIRMN) the chain is on the cytoplasmic side. A helical membrane pass occupies residues 291-309 (YLKTWFVIDLLSCLPYDVI). Residues 310–318 (NAFENVDEG) are Extracellular-facing. Residues 319–341 (ISSLFSSLKVVRLLRLGRVARKL) traverse the membrane as a helical; Voltage-sensor segment. Over 342-350 (DHYIEYGAA) the chain is Cytoplasmic. A helical transmembrane segment spans residues 351 to 372 (VLVLLVCVFGLAAHWMACIWYS). The Extracellular segment spans residues 373 to 421 (IGDYEIFDEDTKTIRNNSWLYQLALDIGTPYQFNGSGSGKWEGGPSKNS). Residues asparagine 388 and asparagine 406 are each glycosylated (N-linked (GlcNAc...) asparagine). An intramembrane region (pore-forming) is located at residues 422–443 (VYISSLYFTMTSLTSVGFGNIA). Positions 436–441 (SVGFGN) match the Selectivity filter motif. Topologically, residues 444–450 (PSTDIEK) are extracellular. The chain crosses the membrane as a helical span at residues 451-471 (IFAVAIMMIGSLLYATIFGNV). Residues 472 to 962 (TTIFQQMYAN…ESDRDIFGAS (491 aa)) are Cytoplasmic-facing. Positions 646 to 743 (KRDALQKVLE…LDDLDVEKGN (98 aa)) are calmodulin-binding. The interaction with cyclic nucleotide-binding pocket stretch occupies residues 672–674 (YNL). Over residues 830–852 (ESMETLPERTKASGEATLKKTDS) the composition is skewed to basic and acidic residues. Disordered stretches follow at residues 830-859 (ESMETLPERTKASGEATLKKTDSCDSGITK) and 933-962 (SRGSSQSPQDTCEVSRPQSPESDRDIFGAS). The CAD (involved in subunit assembly) stretch occupies residues 897 to 937 (ATVLEVKHELKEDIKALNAKMTSIEKQLSEILRILMSRGSS). Positions 934–952 (RGSSQSPQDTCEVSRPQSP) are enriched in polar residues. Phosphoserine occurs at positions 947, 951, and 954. Positions 953–962 (ESDRDIFGAS) are enriched in basic and acidic residues.

This sequence belongs to the potassium channel family. H (Eag) (TC 1.A.1.20) subfamily. Kv10.1/KCNH1 sub-subfamily. As to quaternary structure, homomultimer. The potassium channel is composed of a homo- or heterotetrameric complex of pore-forming alpha subunits that can associate with modulating beta subunits. Heteromultimer with KCNH5/EAG2. Interacts with ALG10B. Interacts with RABEP1. Interacts (via C-terminus) with CTTN. Interacts (via cytoplasmic region) with Ca(2+)-bound calmodulin. Channel activity is regulated via tyrosine phosphorylation/dephosphorylation by SRC and PTPN6. Detected in cerebellum, at parallel fiber synapses on Purkinje cell spines. Detected in hippocampus neurons (at protein level). Detected in brain, but not in the other tissues tested; expression is highest in granular cells of the dentate gyrus, in hippocampus CA3 pyramidal cells, and in cerebellar granule cells. Detected in pituitary.

The protein localises to the cell membrane. Its subcellular location is the nucleus inner membrane. It localises to the cell projection. It is found in the dendrite. The protein resides in the axon. The protein localises to the presynaptic cell membrane. Its subcellular location is the perikaryon. It localises to the postsynaptic density membrane. It is found in the early endosome membrane. It catalyses the reaction K(+)(in) = K(+)(out). With respect to regulation, channel activity is inhibited by interaction with Ca(2+)-bound calmodulin. Interaction of a single pore-forming alpha subunit with a calmodulin chain is sufficient to promote channel closure. Channel activity is not regulated by cyclic nucleotides. Channel activity is inhibited by binding intracellular phosphatidylinositol-3,5-bisphosphate and phosphatidylinositol-4,5-bisphosphate (PIP2), but is not inhibited by phosphatidylinositol 4-phosphate. Pore-forming (alpha) subunit of a voltage-gated delayed rectifier potassium channel that mediates outward-rectifying potassium currents which, on depolarization, reaches a steady-state level and do not inactivate. The activation kinetics depend on the prepulse potential and external divalent cation concentration. With negative prepulses, the current activation is delayed and slowed down several fold, whereas more positive prepulses speed up activation. The time course of activation is biphasic with a fast and a slowly activating current component. Activates at more positive membrane potentials and exhibit a steeper activation curve. Channel properties are modulated by subunit assembly. Mediates IK(NI) current in myoblasts. Involved in the regulation of cell proliferation and differentiation, in particular adipogenic and osteogenic differentiation in bone marrow-derived mesenchymal stem cells (MSCs). In Rattus norvegicus (Rat), this protein is Voltage-gated delayed rectifier potassium channel KCNH1.